Reading from the N-terminus, the 867-residue chain is FO synthase (867 aa).

The interval 1-22 is disordered; sequence MTTSATSGTGPADPAGPTENSM. Radical SAM core domains lie at 75 to 325 and 534 to 769; these read ITYS…LQAP and VTYI…LLHP. The tract at residues 76 to 407 is cofG-like; the sequence is TYSKSVFVPL…PRLRPHVAAL (332 aa). Residues cysteine 89, cysteine 93, cysteine 96, cysteine 548, cysteine 552, and cysteine 555 each coordinate [4Fe-4S] cluster. Residues 511–844 are cofH-like; it reads EGPALDALCG…KPRTTLYGPV (334 aa). The interval 835-867 is disordered; sequence KPRTTLYGPVPEERQRAARDSDGHLPELLPVLD. Residues 845–859 show a composition bias toward basic and acidic residues; it reads PEERQRAARDSDGHL.

This sequence in the N-terminal section; belongs to the radical SAM superfamily. CofG family. It in the C-terminal section; belongs to the radical SAM superfamily. CofH family. It depends on [4Fe-4S] cluster as a cofactor.

The catalysed reaction is 5-amino-6-(D-ribitylamino)uracil + L-tyrosine + S-adenosyl-L-methionine = 5-amino-5-(4-hydroxybenzyl)-6-(D-ribitylimino)-5,6-dihydrouracil + 2-iminoacetate + 5'-deoxyadenosine + L-methionine + H(+). The enzyme catalyses 5-amino-5-(4-hydroxybenzyl)-6-(D-ribitylimino)-5,6-dihydrouracil + S-adenosyl-L-methionine = 7,8-didemethyl-8-hydroxy-5-deazariboflavin + 5'-deoxyadenosine + L-methionine + NH4(+) + H(+). It functions in the pathway cofactor biosynthesis; coenzyme F0 biosynthesis. Functionally, catalyzes the radical-mediated synthesis of 7,8-didemethyl-8-hydroxy-5-deazariboflavin (FO) from 5-amino-6-(D-ribitylamino)uracil and L-tyrosine. The chain is FO synthase (fbiC) from Streptomyces coelicolor (strain ATCC BAA-471 / A3(2) / M145).